The chain runs to 276 residues: Ribosomal RNA small subunit methyltransferase A (276 aa).

The S-adenosyl-L-methionine site is built by His-15, Leu-17, Gly-42, Glu-64, Asp-89, and Asn-108.

The protein belongs to the class I-like SAM-binding methyltransferase superfamily. rRNA adenine N(6)-methyltransferase family. RsmA subfamily.

It is found in the cytoplasm. The enzyme catalyses adenosine(1518)/adenosine(1519) in 16S rRNA + 4 S-adenosyl-L-methionine = N(6)-dimethyladenosine(1518)/N(6)-dimethyladenosine(1519) in 16S rRNA + 4 S-adenosyl-L-homocysteine + 4 H(+). In terms of biological role, specifically dimethylates two adjacent adenosines (A1518 and A1519) in the loop of a conserved hairpin near the 3'-end of 16S rRNA in the 30S particle. May play a critical role in biogenesis of 30S subunits. The chain is Ribosomal RNA small subunit methyltransferase A from Prochlorococcus marinus (strain MIT 9312).